The following is a 1000-amino-acid chain: uncharacterized protein (1000 aa).

Positions 787–809 (RQYEKLKRQRAKSETERHQERHG) are enriched in basic and acidic residues. The segment at 787–812 (RQYEKLKRQRAKSETERHQERHGKLS) is disordered.

This is an uncharacterized protein from Picosynechococcus sp. (strain ATCC 27264 / PCC 7002 / PR-6) (Agmenellum quadruplicatum).